The primary structure comprises 240 residues: Ribosomal RNA small subunit methyltransferase G (240 aa).

S-adenosyl-L-methionine is bound by residues glycine 80, phenylalanine 85, 131-132 (AE), and arginine 150.

The protein belongs to the methyltransferase superfamily. RNA methyltransferase RsmG family.

The protein resides in the cytoplasm. Specifically methylates the N7 position of a guanine in 16S rRNA. In Dictyoglomus thermophilum (strain ATCC 35947 / DSM 3960 / H-6-12), this protein is Ribosomal RNA small subunit methyltransferase G.